The sequence spans 300 residues: Jacalin-related lectin 33 (300 aa).

Positions 1-20 are disordered; that stretch reads MAQKVEAGGGAGGASWDDGV. At alanine 2 the chain carries N-acetylalanine. Jacalin-type lectin domains follow at residues 2–146 and 154–297; these read AQKV…YFAT and AKKL…HVMP.

The protein belongs to the jacalin lectin family. As to quaternary structure, component of the PYK10 complex, at least composed of PYK10/BGLU23, BGLU21, BGLU22, JAL22, JAL23, PBP1/JAL30, PBP2/JAL31, JAL32, JAL33, JAL34, JAL35, GLL22 and GLL23.

In terms of biological role, sugar-binding protein showing significant affinity for (Glc alpha(1-4)Glc)(3) maltohexaose, (Glc alpha(1-6)Glc)(3) isomaltohexaose, Gal alpha(1-4)Gal beta(1-4)Glc, GalNAc alpha(1-3)(Fuc alpha(1-2)) and Gal beta(1-3)(Fuc alpha(1-4))GlcNAc beta(1-3)Gal beta(1-4)Glc. The protein is Jacalin-related lectin 33 (JAL33) of Arabidopsis thaliana (Mouse-ear cress).